We begin with the raw amino-acid sequence, 104 residues long: MEKYAFRMRLHPGKAAEYQARHDAIRPELVALLKDAGISDYSIHLDEENDLLFGVLWRSDDHKMADLPSHPVMRKWWAHMADIMETHADNEPVAAPLKTVFHLR.

Tyrosine 18 contributes to the substrate binding site. Histidine 22 acts as the Proton donor in catalysis. Substrate-binding positions include tyrosine 41 and 76–77 (WW).

It belongs to the rhamnose mutarotase family. As to quaternary structure, homodimer.

The protein resides in the cytoplasm. The enzyme catalyses alpha-L-rhamnose = beta-L-rhamnose. It participates in carbohydrate metabolism; L-rhamnose metabolism. Involved in the anomeric conversion of L-rhamnose. This chain is L-rhamnose mutarotase, found in Sinorhizobium medicae (strain WSM419) (Ensifer medicae).